Reading from the N-terminus, the 325-residue chain is UPF0285 protein MA_3856 (325 aa).

The protein belongs to the UPF0285 family.

The chain is UPF0285 protein MA_3856 from Methanosarcina acetivorans (strain ATCC 35395 / DSM 2834 / JCM 12185 / C2A).